We begin with the raw amino-acid sequence, 20 residues long: Major extrapallial fluid protein (20 aa).

A disordered region spans residues 1–20 (NPVDDHHDDHHDAPIVEHHD).

In terms of assembly, homodimer. Glycosylated.

Functionally, appears to be a building block of the soluble organic matrix of the shell. The protein binds calcium. This is Major extrapallial fluid protein from Mytilus edulis (Blue mussel).